Consider the following 577-residue polypeptide: Double-stranded RNA-binding protein Staufen homolog 1 (577 aa).

Serine 2 carries the N-acetylserine modification. The span at serine 34–serine 44 shows a compositional bias: polar residues. The tract at residues serine 34–alanine 55 is disordered. The 91-residue stretch at threonine 72–asparagine 162 folds into the DRBM 1 domain. Arginine 108 is subject to Asymmetric dimethylarginine. Arginine 115 is subject to Asymmetric dimethylarginine; alternate. The residue at position 115 (arginine 115) is an Omega-N-methylarginine; alternate. Position 176 is a phosphoserine (serine 176). One can recognise a DRBM 2 domain in the interval serine 184–lysine 251. Serine 278 bears the Phosphoserine mark. Residues asparagine 286 to phenylalanine 354 form the DRBM 3 domain. Positions glutamine 360 to serine 397 are disordered. The segment covering leucine 366 to threonine 384 has biased composition (basic and acidic residues). Serine 390 is modified (phosphoserine).

Binds tubulin. Binds with low affinity single-stranded RNA or DNA homopolymers. Interacts with CASC3 in an RNA-dependent manner. Identified in a mRNP complex, at least composed of DHX9, DDX3X, ELAVL1, HNRNPU, IGF2BP1, ILF3, PABPC1, PCBP2, PTBP2, STAU1, STAU2, SYNCRIP and YBX1. As to quaternary structure, (Microbial infection) Interacts with HERV-K rec and gag proteins. In terms of assembly, (Microbial infection) Interacts with HIV-1 GAG polyprotein. (Microbial infection) Interacts with influenza virus NS1 protein. As to quaternary structure, (Microbial infection) Interacts with Ebola virus NP, VP30 and VP35. In terms of tissue distribution, widely expressed. Expressed in brain, pancreas, heart, skeletal muscles, liver, lung, kidney and placenta.

It is found in the cytoplasm. Its subcellular location is the rough endoplasmic reticulum. In terms of biological role, binds double-stranded RNA (regardless of the sequence) and tubulin. May play a role in specific positioning of mRNAs at given sites in the cell by cross-linking cytoskeletal and RNA components, and in stimulating their translation at the site. Functionally, (Microbial infection) Plays a role in virus particles production of many viruses including of HIV-1, HERV-K, ebola virus and influenza virus. Acts by interacting with various viral proteins involved in particle budding process. The polypeptide is Double-stranded RNA-binding protein Staufen homolog 1 (STAU1) (Homo sapiens (Human)).